We begin with the raw amino-acid sequence, 450 residues long: UDP-N-acetylmuramoylalanine--D-glutamate ligase (450 aa).

Glycine 119 to threonine 125 provides a ligand contact to ATP.

This sequence belongs to the MurCDEF family.

It is found in the cytoplasm. It carries out the reaction UDP-N-acetyl-alpha-D-muramoyl-L-alanine + D-glutamate + ATP = UDP-N-acetyl-alpha-D-muramoyl-L-alanyl-D-glutamate + ADP + phosphate + H(+). It functions in the pathway cell wall biogenesis; peptidoglycan biosynthesis. Cell wall formation. Catalyzes the addition of glutamate to the nucleotide precursor UDP-N-acetylmuramoyl-L-alanine (UMA). The polypeptide is UDP-N-acetylmuramoylalanine--D-glutamate ligase (Streptococcus pneumoniae (strain CGSP14)).